Here is a 178-residue protein sequence, read N- to C-terminus: 2-C-methyl-D-erythritol 2,4-cyclodiphosphate synthase (178 aa).

A divalent metal cation contacts are provided by Asp24, His26, and His61. 24 to 26 (DSH) contacts 4-CDP-2-C-methyl-D-erythritol 2-phosphate. 4-CDP-2-C-methyl-D-erythritol 2-phosphate is bound at residue 150 to 153 (TSGE).

It belongs to the IspF family. In terms of assembly, homotrimer. A divalent metal cation is required as a cofactor.

It catalyses the reaction 4-CDP-2-C-methyl-D-erythritol 2-phosphate = 2-C-methyl-D-erythritol 2,4-cyclic diphosphate + CMP. It participates in isoprenoid biosynthesis; isopentenyl diphosphate biosynthesis via DXP pathway; isopentenyl diphosphate from 1-deoxy-D-xylulose 5-phosphate: step 4/6. In terms of biological role, involved in the biosynthesis of isopentenyl diphosphate (IPP) and dimethylallyl diphosphate (DMAPP), two major building blocks of isoprenoid compounds. Catalyzes the conversion of 4-diphosphocytidyl-2-C-methyl-D-erythritol 2-phosphate (CDP-ME2P) to 2-C-methyl-D-erythritol 2,4-cyclodiphosphate (ME-CPP) with a corresponding release of cytidine 5-monophosphate (CMP). The chain is 2-C-methyl-D-erythritol 2,4-cyclodiphosphate synthase from Chlamydia trachomatis serovar L2 (strain ATCC VR-902B / DSM 19102 / 434/Bu).